Reading from the N-terminus, the 353-residue chain is Putative transport protein aq_740 (353 aa).

A run of 8 helical transmembrane segments spans residues 4 to 24 (LSLF…LYLL), 28 to 48 (FNPI…YGFI), 60 to 80 (FLVI…FAVI), 156 to 176 (VYTA…LFFI), 209 to 229 (VLAV…MGFI), 240 to 260 (LIWA…AAFV), 268 to 288 (LFTT…TFLI), and 309 to 329 (VALF…GVFL).

It belongs to the autoinducer-2 exporter (AI-2E) (TC 2.A.86) family.

Its subcellular location is the cell membrane. This is Putative transport protein aq_740 from Aquifex aeolicus (strain VF5).